The sequence spans 230 residues: Ribosome biogenesis protein SLX9 homolog (230 aa).

Positions 1–11 (MGKVRGLRARV) are enriched in basic residues. Disordered regions lie at residues 1-42 (MGKV…SAAG) and 155-187 (LGLEAGSRRQARSRESNKPRPSELSRMSAAQRQ). Residues 25 to 38 (GPAPPAPEATPPPA) show a composition bias toward pro residues. T34 is subject to Phosphothreonine. A compositionally biased stretch (basic and acidic residues) spans 166–177 (RSRESNKPRPSE). A Phosphoserine modification is found at S203.

The protein belongs to the SLX9 family. Not detected in any tested tissue.

It localises to the nucleus. The protein resides in the nucleolus. May be involved in ribosome biogenesis. This is Ribosome biogenesis protein SLX9 homolog from Homo sapiens (Human).